Consider the following 194-residue polypeptide: Myelin-associated neurite-outgrowth inhibitor (194 aa).

Position 1 is an N-acetylmethionine (M1). Over 1-18 the chain is Cytoplasmic; sequence MNPVYSPGSSGVPYANAK. Phosphoserine is present on S6. Residues 19-41 form a helical membrane-spanning segment; it reads GIGYPAGFPVGYAAAPAYSPNMY. Over 42-141 the chain is Extracellular; the sequence is PGANPTFQTG…PAPIPPPRGS (100 aa). The N-linked (GlcNAc...) asparagine glycan is linked to N45. Residues 142–163 traverse the membrane as a helical segment; the sequence is GVTMGMVAGTTMAMSAGTLLTA. Over 164-194 the chain is Cytoplasmic; sequence HSPTPVAPHPVTVPTYRAPGTPTYSYVPPQW.

The protein belongs to the FAM168 family. As to quaternary structure, may form homodimers. May interact with DAZAP2, FAM168A, PRDX6, RBM6, TMTC1 and YPEL2. Interacts with CDC27. In terms of processing, N-glycosylated. Predominantly expressed in the brain, including olfactory bulb, cortex and cerebellum (at protein level).

The protein localises to the cytoplasm. It is found in the perinuclear region. The protein resides in the cell membrane. It localises to the cell projection. Its subcellular location is the axon. Inhibitor of neuronal axonal outgrowth. Acts as a negative regulator of CDC42 and STAT3 and a positive regulator of STMN2. Positive regulator of CDC27. The polypeptide is Myelin-associated neurite-outgrowth inhibitor (Fam168b) (Mus musculus (Mouse)).